The following is a 107-amino-acid chain: High mobility group protein HMG-I/HMG-Y (107 aa).

The interval 1–107 is disordered; that stretch reads MSESSSKSSQ…ISQESSEEEQ (107 aa). N-acetylserine is present on Ser2. Position 7 is an N6-acetyllysine (Lys7). Ser8 is subject to ADP-ribosylserine. Ser9 carries the ADP-ribosylserine; alternate modification. Ser9 is modified (phosphoserine; alternate). At Lys15 the chain carries N6-acetyllysine; alternate. A Glycyl lysine isopeptide (Lys-Gly) (interchain with G-Cter in SUMO2); alternate cross-link involves residue Lys15. Basic and acidic residues predominate over residues 15–24; that stretch reads KQEKDGTEKR. Positions 21 to 31 form a DNA-binding region, a.T hook 1; it reads TEKRGRGRPRK. An Asymmetric dimethylarginine; alternate modification is found at Arg26. Arg26 is modified (omega-N-methylarginine; alternate). At Arg26 the chain carries Symmetric dimethylarginine; alternate. Position 36 is a phosphoserine; by HIPK2 and CDC2 (Ser36). Phosphothreonine occurs at positions 39 and 42. Phosphoserine occurs at positions 44 and 49. Position 53 is a phosphothreonine; by HIPK2 and CDC2 (Thr53). A DNA-binding region (a.T hook 2) is located at residues 53–63; it reads TPKRPRGRPKG. The segment at 53 to 77 is interaction with HIPK2; the sequence is TPKRPRGRPKGSKNKGAAKTRKTTT. The segment covering 55-74 has biased composition (basic residues); the sequence is KRPRGRPKGSKNKGAAKTRK. Asymmetric dimethylarginine; by PRMT6; alternate occurs at positions 58 and 60. Arg58 and Arg60 each carry omega-N-methylarginine; by PRMT6; alternate. Residue Lys67 is modified to Phosphothreonine. Thr78 is subject to Phosphothreonine; by HIPK2 and CDC2. The segment at residues 78–89 is a DNA-binding region (a.T hook 3); the sequence is TPGRKPRGRPKK. The segment covering 93–107 has biased composition (acidic residues); that stretch reads EEEEGISQESSEEEQ. The residue at position 99 (Ser99) is a Phosphoserine. Residues Ser102 and Ser103 each carry the phosphoserine; by CK modification.

Belongs to the HMGA family. As to quaternary structure, interacts with HIPK2. Post-translationally, constitutively phosphorylated on two or three sites. Hyperphosphorylated at early stages of apoptosis, followed by dephosphorylation and methylation, which coincides with chromatin condensation. Isoforms HMG-I and HMG-Y can be phosphorylated by HIPK2. Phosphorylation of HMG-I at Ser-36, Thr-53 and Thr-78 and of HMG-Y at Thr-42 and Thr-67 by HIPK2 modulates DNA-binding affinity. HMG-Y is not methylated. In terms of processing, methylation at Arg-58 is mutually exclusive with methylation at Arg-60.

It is found in the nucleus. It localises to the chromosome. Its function is as follows. HMG-I/Y bind preferentially to the minor groove of A+T rich regions in double-stranded DNA. It is suggested that these proteins could function in nucleosome phasing and in the 3'-end processing of mRNA transcripts. They are also involved in the transcription regulation of genes containing, or in close proximity to A+T-rich regions. The chain is High mobility group protein HMG-I/HMG-Y (HMGA1) from Homo sapiens (Human).